A 217-amino-acid polypeptide reads, in one-letter code: 3-demethoxyubiquinol 3-hydroxylase (217 aa).

Fe cation contacts are provided by glutamate 66, glutamate 96, histidine 99, glutamate 148, glutamate 180, and histidine 183.

The protein belongs to the COQ7 family. The cofactor is Fe cation.

The protein resides in the cell membrane. The enzyme catalyses a 5-methoxy-2-methyl-3-(all-trans-polyprenyl)benzene-1,4-diol + AH2 + O2 = a 3-demethylubiquinol + A + H2O. Its pathway is cofactor biosynthesis; ubiquinone biosynthesis. Functionally, catalyzes the hydroxylation of 2-nonaprenyl-3-methyl-6-methoxy-1,4-benzoquinol during ubiquinone biosynthesis. In Xanthomonas euvesicatoria pv. vesicatoria (strain 85-10) (Xanthomonas campestris pv. vesicatoria), this protein is 3-demethoxyubiquinol 3-hydroxylase.